The primary structure comprises 479 residues: Adenylate kinase 8 (479 aa).

Adenylate kinase stretches follow at residues proline 58–glutamine 258 and proline 269–isoleucine 471. Alanine 67–threonine 72 is an ATP binding site. Residues threonine 87 to valine 113 are NMP 1. AMP-binding positions include glycine 140–glutamate 143, glutamine 147, and arginine 203. Residues glycine 177–valine 206 are LID 1. Glycine 278–leucine 283 lines the ATP pocket. The interval cysteine 298 to valine 327 is NMP 2. Residues methionine 325 to valine 327, glycine 354 to arginine 357, and glutamine 361 each bind AMP. The interval leucine 391–aspartate 424 is LID 2. Residue arginine 392 participates in ATP binding.

The protein belongs to the adenylate kinase family. Interacts with CFAP45 and CFAP52; CFAP45 and AK8 dimerization may create a cavity at the interface of the dimer that can accommodate AMP. In terms of tissue distribution, expressed in respiratory cells (at protein level).

The protein resides in the cytoplasm. It localises to the cytosol. It is found in the cytoskeleton. The protein localises to the cilium axoneme. It carries out the reaction AMP + ATP = 2 ADP. The enzyme catalyses a 2'-deoxyribonucleoside 5'-diphosphate + ATP = a 2'-deoxyribonucleoside 5'-triphosphate + ADP. It catalyses the reaction a ribonucleoside 5'-diphosphate + ATP = a ribonucleoside 5'-triphosphate + ADP. In terms of biological role, nucleoside monophosphate (NMP) kinase that catalyzes the reversible transfer of the terminal phosphate group between nucleoside triphosphates and monophosphates. Has highest activity toward AMP, and weaker activity toward dAMP, CMP and dCMP. Also displays broad nucleoside diphosphate kinase activity. This Homo sapiens (Human) protein is Adenylate kinase 8 (AK8).